Reading from the N-terminus, the 361-residue chain is MEKKMFNSLMKIHQKYQDLKQLLETDQILNDQKQYLQIAKEIASITEIIEVFQKFLDDQKVLEDAKTILIQEDDPELIQLAKVEIATMSKNIEEYEKKLLILMLPKDKNDEKDVIVEIRGAAGGDEANIFVGDLFKMYHKWADSQKAKVKVLSSSLALAGGFSQIIFQISGQKIYSKLKFESGVHRVQRVPATETMGRIHTSTATVTVMPKIDEKIEIEINPSDLKIDTYRSSGAGGQSVNTTDSAVRITHIPTGIVVTSQDERSQIGNKEIAMGILKSKIYNLELQKQQQKQSDFRKLAGSGARSEKIRTYNYPQDRLTDHRINFSTSLKPIIQGSLNPIIEALLAQEKTELILQNYANK.

At glutamine 238 the chain carries N5-methylglutamine.

It belongs to the prokaryotic/mitochondrial release factor family. Methylated by PrmC. Methylation increases the termination efficiency of RF1.

It localises to the cytoplasm. Its function is as follows. Peptide chain release factor 1 directs the termination of translation in response to the peptide chain termination codons UAG and UAA. The sequence is that of Peptide chain release factor 1 from Mesomycoplasma hyopneumoniae (strain 7448) (Mycoplasma hyopneumoniae).